The primary structure comprises 732 residues: Polyribonucleotide nucleotidyltransferase (732 aa).

The Mg(2+) site is built by D502 and D508. Residues 569 to 628 enclose the KH domain; that stretch reads PRLTSIQIPVDAIGMVIGKGGETIRSITEETGAEINIDDDGTVTIACSSPEGTKAAVETI. The S1 motif domain occupies 638-712; sequence GTIYMGKVRD…GKTKFALSIK (75 aa).

It belongs to the polyribonucleotide nucleotidyltransferase family. Requires Mg(2+) as cofactor.

The protein localises to the cytoplasm. It carries out the reaction RNA(n+1) + phosphate = RNA(n) + a ribonucleoside 5'-diphosphate. Functionally, involved in mRNA degradation. Catalyzes the phosphorolysis of single-stranded polyribonucleotides processively in the 3'- to 5'-direction. In Chlorobaculum parvum (strain DSM 263 / NCIMB 8327) (Chlorobium vibrioforme subsp. thiosulfatophilum), this protein is Polyribonucleotide nucleotidyltransferase.